Here is a 480-residue protein sequence, read N- to C-terminus: Siroheme synthase 2 (480 aa).

The precorrin-2 dehydrogenase /sirohydrochlorin ferrochelatase stretch occupies residues 1-202 (MDYLPMFARL…QDWQSAETWL (202 aa)). NAD(+) is bound by residues 22–23 (EV) and 43–44 (PE). Residue S126 is modified to Phosphoserine. Residues 214–480 (GEVVLVGAGP…GCDLKLVNLA (267 aa)) form a uroporphyrinogen-III C-methyltransferase region. S-adenosyl-L-methionine is bound at residue P223. D246 (proton acceptor) is an active-site residue. The active-site Proton donor is the K268. Residues 299 to 301 (GGD), 329 to 330 (TA), M381, and G410 contribute to the S-adenosyl-L-methionine site.

The protein in the N-terminal section; belongs to the precorrin-2 dehydrogenase / sirohydrochlorin ferrochelatase family. In the C-terminal section; belongs to the precorrin methyltransferase family.

The enzyme catalyses uroporphyrinogen III + 2 S-adenosyl-L-methionine = precorrin-2 + 2 S-adenosyl-L-homocysteine + H(+). The catalysed reaction is precorrin-2 + NAD(+) = sirohydrochlorin + NADH + 2 H(+). It catalyses the reaction siroheme + 2 H(+) = sirohydrochlorin + Fe(2+). It functions in the pathway cofactor biosynthesis; adenosylcobalamin biosynthesis; precorrin-2 from uroporphyrinogen III: step 1/1. Its pathway is cofactor biosynthesis; adenosylcobalamin biosynthesis; sirohydrochlorin from precorrin-2: step 1/1. The protein operates within porphyrin-containing compound metabolism; siroheme biosynthesis; precorrin-2 from uroporphyrinogen III: step 1/1. It participates in porphyrin-containing compound metabolism; siroheme biosynthesis; siroheme from sirohydrochlorin: step 1/1. It functions in the pathway porphyrin-containing compound metabolism; siroheme biosynthesis; sirohydrochlorin from precorrin-2: step 1/1. In terms of biological role, multifunctional enzyme that catalyzes the SAM-dependent methylations of uroporphyrinogen III at position C-2 and C-7 to form precorrin-2 via precorrin-1. Then it catalyzes the NAD-dependent ring dehydrogenation of precorrin-2 to yield sirohydrochlorin. Finally, it catalyzes the ferrochelation of sirohydrochlorin to yield siroheme. The sequence is that of Siroheme synthase 2 from Aeromonas salmonicida (strain A449).